We begin with the raw amino-acid sequence, 503 residues long: Dihydropyrimidinase (503 aa).

Residues His66, His68, and Lys158 each coordinate Zn(2+). N6-carboxylysine is present on Lys158. Substrate is bound at residue Tyr163. Residues His191, His247, and Asp325 each contribute to the Zn(2+) site. Asn346 lines the substrate pocket.

It belongs to the metallo-dependent hydrolases superfamily. Hydantoinase/dihydropyrimidinase family. Homotetramer. Zn(2+) serves as cofactor. In terms of processing, carboxylation allows a single lysine to coordinate two zinc ions.

The catalysed reaction is 5,6-dihydrouracil + H2O = 3-(carbamoylamino)propanoate + H(+). Its function is as follows. Catalyzes the second step of the reductive pyrimidine degradation, the reversible hydrolytic ring opening of dihydropyrimidines. Can catalyze the ring opening of 5,6-dihydrouracil to N-carbamyl-alanine and of 5,6-dihydrothymine to N-carbamyl-amino isobutyrate. In Dictyostelium discoideum (Social amoeba), this protein is Dihydropyrimidinase (pyd2).